We begin with the raw amino-acid sequence, 139 residues long: Maximins 4/H3 type 7 (139 aa).

Positions 1–18 (MNFKYIVAVSFLIASAYA) are cleaved as a signal peptide. The propeptide occupies 19–43 (RSVQNDEQSLSQRDVLEEESLREIR). Asn-70 bears the Asparagine amide mark. A propeptide spanning residues 74-118 (TAEDHEVMKRLEAIMRDLDSLDYPEEASERETRGFNQDEIAKEKR) is cleaved from the precursor. Ile-138 carries the isoleucine amide modification.

This sequence belongs to the bombinin family. Expressed by the skin glands.

The protein resides in the secreted. Maximin-4 shows antibacterial activity against both Gram-positive and Gram-negative bacteria. It also shows antimicrobial activity against the fungus C.albicans, but not against A.flavus nor P.uticale. It has little hemolytic activity. It does not possess a significant cytotoxicity against tumor cell lines. It does not possess a significant anti-HIV activity. Its function is as follows. Maximin-H3 shows antibacterial activity against both Gram-positive and Gram-negative bacteria. It also shows antimicrobial activity against the fungus C.albicans. Shows strong hemolytic activity. The protein is Maximins 4/H3 type 7 of Bombina maxima (Giant fire-bellied toad).